The following is a 121-amino-acid chain: Large ribosomal subunit protein uL14 (121 aa).

This sequence belongs to the universal ribosomal protein uL14 family. In terms of assembly, part of the 50S ribosomal subunit. Forms a cluster with proteins L3 and L19. In the 70S ribosome, L14 and L19 interact and together make contacts with the 16S rRNA in bridges B5 and B8.

Its function is as follows. Binds to 23S rRNA. Forms part of two intersubunit bridges in the 70S ribosome. The polypeptide is Large ribosomal subunit protein uL14 (Prochlorococcus marinus (strain MIT 9211)).